Consider the following 667-residue polypeptide: tRNA uridine 5-carboxymethylaminomethyl modification enzyme MnmG (667 aa).

Residue 13-18 (GGGHAG) participates in FAD binding. 280 to 294 (GPRYCPSVEDKINRF) contributes to the NAD(+) binding site.

Belongs to the MnmG family. Homodimer. Heterotetramer of two MnmE and two MnmG subunits. Requires FAD as cofactor.

The protein resides in the cytoplasm. NAD-binding protein involved in the addition of a carboxymethylaminomethyl (cmnm) group at the wobble position (U34) of certain tRNAs, forming tRNA-cmnm(5)s(2)U34. This Polaromonas naphthalenivorans (strain CJ2) protein is tRNA uridine 5-carboxymethylaminomethyl modification enzyme MnmG.